The sequence spans 721 residues: Polyribonucleotide nucleotidyltransferase (721 aa).

2 residues coordinate Mg(2+): D495 and D501. In terms of domain architecture, KH spans 562 to 621 (PRLLSFRIDPELIGTVIGPGGRTIKGITERTNTKIDIEDGGIVTIASHDGAAAEEAQKII). Residues 631–699 (GEIFPGVVTR…SRGRINLTLR (69 aa)) form the S1 motif domain. Positions 702–721 (GQNGGMSYPEPTPTPVAPLS) are disordered. The span at 711-721 (EPTPTPVAPLS) shows a compositional bias: pro residues.

This sequence belongs to the polyribonucleotide nucleotidyltransferase family. Mg(2+) is required as a cofactor.

It localises to the cytoplasm. The catalysed reaction is RNA(n+1) + phosphate = RNA(n) + a ribonucleoside 5'-diphosphate. In terms of biological role, involved in mRNA degradation. Catalyzes the phosphorolysis of single-stranded polyribonucleotides processively in the 3'- to 5'-direction. This Prochlorococcus marinus (strain MIT 9301) protein is Polyribonucleotide nucleotidyltransferase.